The following is a 182-amino-acid chain: Transcription repressor OFP11 (182 aa).

The tract at residues 62–94 (PLHRRHSSENPAGVFSTNRREEEEEDETTTSVS) is disordered. Positions 104–169 (MKHIESPDPY…VSAFADTLLW (66 aa)) constitute an OVATE domain.

In terms of tissue distribution, expressed in roots, rosette and cauline leaves, shoots, stems, flower buds and siliques.

The protein localises to the nucleus. Transcriptional repressor that may regulate multiple aspects of plant growth and development through the regulation of BEL1-LIKE (BLH) and KNOX TALE (KNAT) homeodomain transcription factors. The sequence is that of Transcription repressor OFP11 (OFP11) from Arabidopsis thaliana (Mouse-ear cress).